The following is a 588-amino-acid chain: Phomenoic acid biosynthesis cluster cytochrome P450 monooxygenase (588 aa).

Residues 1–21 (MSFARIFITILLLFILRRAFK) form the signal peptide. Asn293 carries N-linked (GlcNAc...) asparagine glycosylation. The segment covering 467-486 (HQSDPDRFKPSPDAPDEKLF) has biased composition (basic and acidic residues). The disordered stretch occupies residues 467 to 490 (HQSDPDRFKPSPDAPDEKLFRPSR). Cys519 contacts heme.

The protein belongs to the cytochrome P450 family. The cofactor is heme.

It functions in the pathway secondary metabolite biosynthesis. In terms of biological role, cytochrome P450 monooxygenase; part of the gene cluster that mediates the biosynthesis of phomenoic acid, a long chain aliphatic carboxylic acid that does not appear to be essential for pathogenicity but may play a role in allowing to outcompete other fungi in the environmental niche via its antifungal properties. The polyketide synthase produces the long methylated aliphatic carboxylic acid chain of phomenoic acid. The cluster-specific cytochrome P450 monooxygenase may then hydroxylate the methyl group of carbon 31. The putative dehydrogenase YogA, which has no obvious role in phomenoic acid biosynthesis, may further modify phomenoic acid to produce a compound not identified yet. This chain is Phomenoic acid biosynthesis cluster cytochrome P450 monooxygenase, found in Leptosphaeria maculans (strain JN3 / isolate v23.1.3 / race Av1-4-5-6-7-8) (Blackleg fungus).